Reading from the N-terminus, the 45-residue chain is Scolopendra 20417.15 Da toxin (45 aa).

The interval 26 to 45 is disordered; sequence KVANGQEAGQPGAXNMKELH.

The protein belongs to the CRISP family. Venom allergen 5-like subfamily. Contains 3 disulfide bonds. As to expression, expressed by the venom gland.

The protein localises to the secreted. This chain is Scolopendra 20417.15 Da toxin, found in Scolopendra viridicornis nigra (Brazilian giant centipede).